Reading from the N-terminus, the 384-residue chain is S-adenosylmethionine synthase (384 aa).

ATP is bound at residue His15. Asp17 serves as a coordination point for Mg(2+). Glu43 contacts K(+). Residues Glu56 and Gln99 each coordinate L-methionine. A flexible loop region spans residues 99–109 (QSPDINQGVDR). ATP-binding positions include 164–166 (DAK), 230–231 (RF), Asp239, 245–246 (RK), Ala262, and Lys266. Position 239 (Asp239) interacts with L-methionine. Lys270 contacts L-methionine.

Belongs to the AdoMet synthase family. In terms of assembly, homotetramer; dimer of dimers. It depends on Mg(2+) as a cofactor. K(+) is required as a cofactor.

The protein resides in the cytoplasm. It carries out the reaction L-methionine + ATP + H2O = S-adenosyl-L-methionine + phosphate + diphosphate. The protein operates within amino-acid biosynthesis; S-adenosyl-L-methionine biosynthesis; S-adenosyl-L-methionine from L-methionine: step 1/1. Its function is as follows. Catalyzes the formation of S-adenosylmethionine (AdoMet) from methionine and ATP. The overall synthetic reaction is composed of two sequential steps, AdoMet formation and the subsequent tripolyphosphate hydrolysis which occurs prior to release of AdoMet from the enzyme. The sequence is that of S-adenosylmethionine synthase from Edwardsiella ictaluri (strain 93-146).